A 334-amino-acid polypeptide reads, in one-letter code: N,N'-diacetyllegionaminic acid synthase (334 aa).

The region spanning 282 to 334 is the AFP-like domain; the sequence is SLVAKKDIKKGEIFSEGNLTTKRPANGISAMRYEEFLGKIATKNYKEDELIRE.

It catalyses the reaction 2,4-diacetamido-2,4,6-trideoxy-alpha-D-mannopyranose + phosphoenolpyruvate + H2O = N,N-diacetyllegionaminate + phosphate. In terms of biological role, involved in biosynthesis of legionaminic acid (5,7-diamino-3,5,7,9-tetradeoxy-D-glycero-D-galacto-non-2-ulosonic acid)(Leg), a sialic acid-like derivative that is incorporated into flagellin via O-linkage to Ser/Thr. Catalyzes the condensation of 2,4-diacetamido-2,4,6-trideoxymannose with phosphoenolpyruvate (PEP) to give N,N'-diacetyllegionaminic acid. This Campylobacter jejuni subsp. jejuni serotype O:2 (strain ATCC 700819 / NCTC 11168) protein is N,N'-diacetyllegionaminic acid synthase (legI).